The sequence spans 258 residues: Imidazole glycerol phosphate synthase subunit HisF (258 aa).

Catalysis depends on residues Asp12 and Asp131.

This sequence belongs to the HisA/HisF family. As to quaternary structure, heterodimer of HisH and HisF.

The protein localises to the cytoplasm. The enzyme catalyses 5-[(5-phospho-1-deoxy-D-ribulos-1-ylimino)methylamino]-1-(5-phospho-beta-D-ribosyl)imidazole-4-carboxamide + L-glutamine = D-erythro-1-(imidazol-4-yl)glycerol 3-phosphate + 5-amino-1-(5-phospho-beta-D-ribosyl)imidazole-4-carboxamide + L-glutamate + H(+). The protein operates within amino-acid biosynthesis; L-histidine biosynthesis; L-histidine from 5-phospho-alpha-D-ribose 1-diphosphate: step 5/9. In terms of biological role, IGPS catalyzes the conversion of PRFAR and glutamine to IGP, AICAR and glutamate. The HisF subunit catalyzes the cyclization activity that produces IGP and AICAR from PRFAR using the ammonia provided by the HisH subunit. The protein is Imidazole glycerol phosphate synthase subunit HisF of Arthrobacter sp. (strain FB24).